Here is a 938-residue protein sequence, read N- to C-terminus: Protein translocase subunit SecA 1 (938 aa).

ATP contacts are provided by residues Gln84, 102–106 (GEGKT), and Asp491. Positions 865–938 (QTGGVATKER…QKTGRHAKRR (74 aa)) are disordered. Residues 918–927 (TRKERREAAR) show a composition bias toward basic and acidic residues.

It belongs to the SecA family. As to quaternary structure, monomer and homodimer. Part of the essential Sec protein translocation apparatus which comprises SecA, SecYEG and auxiliary proteins SecDF. Other proteins may also be involved.

The protein resides in the cell membrane. It is found in the cytoplasm. It catalyses the reaction ATP + H2O + cellular proteinSide 1 = ADP + phosphate + cellular proteinSide 2.. In terms of biological role, part of the Sec protein translocase complex. Interacts with the SecYEG preprotein conducting channel. Has a central role in coupling the hydrolysis of ATP to the transfer of proteins into and across the cell membrane, serving as an ATP-driven molecular motor driving the stepwise translocation of polypeptide chains across the membrane. This is Protein translocase subunit SecA 1 from Mycolicibacterium vanbaalenii (strain DSM 7251 / JCM 13017 / BCRC 16820 / KCTC 9966 / NRRL B-24157 / PYR-1) (Mycobacterium vanbaalenii).